Here is a 240-residue protein sequence, read N- to C-terminus: Urease accessory protein UreD (240 aa).

It belongs to the UreD family. As to quaternary structure, ureD, UreF and UreG form a complex that acts as a GTP-hydrolysis-dependent molecular chaperone, activating the urease apoprotein by helping to assemble the nickel containing metallocenter of UreC. The UreE protein probably delivers the nickel.

The protein localises to the cytoplasm. Its function is as follows. Required for maturation of urease via the functional incorporation of the urease nickel metallocenter. The polypeptide is Urease accessory protein UreD (Granulibacter bethesdensis (strain ATCC BAA-1260 / CGDNIH1)).